Here is a 415-residue protein sequence, read N- to C-terminus: Coenzyme F420 hydrogenase subunit alpha (415 aa).

The Ni(2+) site is built by Cys-68, Cys-71, Cys-391, and Cys-394.

The protein belongs to the [NiFe]/[NiFeSe] hydrogenase large subunit family. Heterocomplex of the form (alpha(1)beta(1)gamma(1))(8). Requires Ni(2+) as cofactor. It depends on iron-sulfur cluster as a cofactor. FAD serves as cofactor.

It carries out the reaction oxidized coenzyme F420-(gamma-L-Glu)(n) + H2 + H(+) = reduced coenzyme F420-(gamma-L-Glu)(n). Its function is as follows. Reduces the physiological low-potential two-electron acceptor coenzyme F420, and the artificial one-electron acceptor methylviologen. The protein is Coenzyme F420 hydrogenase subunit alpha (frhA) of Methanocaldococcus jannaschii (strain ATCC 43067 / DSM 2661 / JAL-1 / JCM 10045 / NBRC 100440) (Methanococcus jannaschii).